A 576-amino-acid chain; its full sequence is Arginine--tRNA ligase (576 aa).

Positions 122-132 (PNVAKQMHVGH) match the 'HIGH' region motif.

It belongs to the class-I aminoacyl-tRNA synthetase family. As to quaternary structure, monomer.

The protein localises to the cytoplasm. The enzyme catalyses tRNA(Arg) + L-arginine + ATP = L-arginyl-tRNA(Arg) + AMP + diphosphate. The protein is Arginine--tRNA ligase of Yersinia pseudotuberculosis serotype O:1b (strain IP 31758).